The sequence spans 931 residues: Translation initiation factor IF-2 (931 aa).

Positions 32 to 310 (KSASSTVEPP…SSKARKNRLA (279 aa)) are disordered. Residues 50–59 (FASSGQGNAS) are compositionally biased toward polar residues. A compositionally biased stretch (pro residues) spans 82–96 (PAAPSAPKPAAPAAP). Residues 156–168 (GNAPQGGNNANGA) are compositionally biased toward low complexity. Composition is skewed to gly residues over residues 217–238 (RPGQGGGQRGGFRGRPGQGGAK), 248–271 (GQGGGQRPAGGGNRFGGNGGGFQG), and 281–298 (ARGGRGRGGAAGAFGRQG). Positions 424 to 596 (PRPPVVTVMG…VLLTADAELD (173 aa)) constitute a tr-type G domain. Positions 433-440 (GHVDHGKT) are G1. 433 to 440 (GHVDHGKT) serves as a coordination point for GTP. The G2 stretch occupies residues 458-462 (GITQR). The G3 stretch occupies residues 483 to 486 (DTPG). GTP contacts are provided by residues 483-487 (DTPGH) and 537-540 (NKID). Residues 537–540 (NKID) are G4. A G5 region spans residues 573–575 (SAK).

This sequence belongs to the TRAFAC class translation factor GTPase superfamily. Classic translation factor GTPase family. IF-2 subfamily.

It localises to the cytoplasm. One of the essential components for the initiation of protein synthesis. Protects formylmethionyl-tRNA from spontaneous hydrolysis and promotes its binding to the 30S ribosomal subunits. Also involved in the hydrolysis of GTP during the formation of the 70S ribosomal complex. The polypeptide is Translation initiation factor IF-2 (Bifidobacterium adolescentis (strain ATCC 15703 / DSM 20083 / NCTC 11814 / E194a)).